Reading from the N-terminus, the 34-residue chain is uncharacterized protein (34 aa).

Residues 1–34 (MRLRRLFKQPSTRVLGVTNCPRQQGHQKRREQPD) are disordered. A compositionally biased stretch (basic residues) spans 25 to 34 (GHQKRREQPD).

This is an uncharacterized protein from Schizosaccharomyces pombe (strain 972 / ATCC 24843) (Fission yeast).